Consider the following 509-residue polypeptide: ATP synthase subunit alpha (509 aa).

169–176 (GDRQTGKT) contributes to the ATP binding site.

Belongs to the ATPase alpha/beta chains family. As to quaternary structure, F-type ATPases have 2 components, CF(1) - the catalytic core - and CF(0) - the membrane proton channel. CF(1) has five subunits: alpha(3), beta(3), gamma(1), delta(1), epsilon(1). CF(0) has three main subunits: a(1), b(2) and c(9-12). The alpha and beta chains form an alternating ring which encloses part of the gamma chain. CF(1) is attached to CF(0) by a central stalk formed by the gamma and epsilon chains, while a peripheral stalk is formed by the delta and b chains.

Its subcellular location is the cell inner membrane. It catalyses the reaction ATP + H2O + 4 H(+)(in) = ADP + phosphate + 5 H(+)(out). Its function is as follows. Produces ATP from ADP in the presence of a proton gradient across the membrane. The alpha chain is a regulatory subunit. The polypeptide is ATP synthase subunit alpha (Brucella melitensis biotype 1 (strain ATCC 23456 / CCUG 17765 / NCTC 10094 / 16M)).